A 124-amino-acid polypeptide reads, in one-letter code: Protein MGF 110-5L (124 aa).

An N-terminal signal peptide occupies residues 1–28 (MLVIILGVIGLLANQVLGLPTQAGGHLR).

This sequence belongs to the asfivirus MGF 110 family.

Plays a role in virus cell tropism, and may be required for efficient virus replication in macrophages. This is Protein MGF 110-5L from Ornithodoros (relapsing fever ticks).